The chain runs to 685 residues: DNA ligase (685 aa).

Residues 47–51, 96–97, and Glu-125 contribute to the NAD(+) site; these read DSEYD and SL. Lys-127 serves as the catalytic N6-AMP-lysine intermediate. Arg-148, Glu-185, Lys-304, and Lys-328 together coordinate NAD(+). The Zn(2+) site is built by Cys-422, Cys-425, Cys-440, and Cys-446. In terms of domain architecture, BRCT spans 605 to 685; it reads ADAQPLKGQT…ALLALFAANR (81 aa).

Belongs to the NAD-dependent DNA ligase family. LigA subfamily. Mg(2+) is required as a cofactor. The cofactor is Mn(2+).

The enzyme catalyses NAD(+) + (deoxyribonucleotide)n-3'-hydroxyl + 5'-phospho-(deoxyribonucleotide)m = (deoxyribonucleotide)n+m + AMP + beta-nicotinamide D-nucleotide.. DNA ligase that catalyzes the formation of phosphodiester linkages between 5'-phosphoryl and 3'-hydroxyl groups in double-stranded DNA using NAD as a coenzyme and as the energy source for the reaction. It is essential for DNA replication and repair of damaged DNA. The polypeptide is DNA ligase (Shewanella putrefaciens (strain CN-32 / ATCC BAA-453)).